The sequence spans 827 residues: MNLSRRDFMKANAALAAASVAGLIIPVKNVNAADTSITWDKAVCRFCGTGCAVLVGTKDGRVVASQGDPDAEVNRGLNCIKGYFLPKIMYGKDRLTHPMLRMKNGQYDKEGEFTPVTWDFAFKTMAEKFKSALKAKGPNGVGMFTSGQSTIFEGVAKSKLFKAGLLSNNIDPNARHCMASAAVAFVRTFGIDEPMGCYDDIEHADAFVLWGSNMAEMHPILWSRISDRRLANPDTVSVNVLSTFEHRSFELADLGILLKPQSDLAILNYIANYLIENNAINREFIEKHTKFKRGETDIGYGLRPQDPREQIAKNVKTAGKMYDSSFEEFKKLVAPYTLEKAHEISGVPKEQLEKLAKLYADPNKKVVSYWTMGINQHTRGVWANHLIYNIHLLTGKISLPGCGPFSLTGQPSACGTAREVGTFIHRLPADLVVTKPEHRKIAEKIWKLPEGLISDKLGFHAVAQSRALKDGKMQVLWQMCNNNMQAGPNINEETYPGWRNPDNFIVVSDPYPTVSALSADLILPTAMWVEKEGAYGNAERRTQFWRQQVKAPGEAKSDLWQLVEFSKYFTTDEVWPAEILAKNPAYQGKTLYEVLYLNGQVNQYSNDELKGRLNDEAYHFGFYIQKGLFEEYASFGRGHGHDLADFDTYHKARGLRWPVVDGKETLWRYREGYDPYVKAGEGVSFYGQADKRAVILAVPYEPPAEVPDREYDLWLTTGRILEHWHTGSMTRRVPELHRSFPNNLVWMNPNDAKKRGLKHGDKIKVISRRGEITSYIDTRGRNKCPEGLIYTTFFDAGQLANKLILDATDPISKETDFKKCAVKVVKA.

A signal peptide (tat-type signal) is located at residues 1–32 (MNLSRRDFMKANAALAAASVAGLIIPVKNVNA). In terms of domain architecture, 4Fe-4S Mo/W bis-MGD-type spans 37-93 (ITWDKAVCRFCGTGCAVLVGTKDGRVVASQGDPDAEVNRGLNCIKGYFLPKIMYGKD). Residues Cys-44, Cys-47, Cys-51, and Cys-79 each coordinate [4Fe-4S] cluster. Residues Lys-81, Gln-148, Asn-173, Cys-177, 210-217 (WGSNMAEM), 242-246 (STFEH), 261-263 (QSD), Met-372, Gln-376, Asn-482, 508-509 (SD), Lys-531, Asp-558, and 717-726 (TGRILEHWHT) contribute to the Mo-bis(molybdopterin guanine dinucleotide) site. Phe-793 contributes to the substrate binding site. Positions 801 and 818 each coordinate Mo-bis(molybdopterin guanine dinucleotide).

This sequence belongs to the prokaryotic molybdopterin-containing oxidoreductase family. NasA/NapA/NarB subfamily. Component of the periplasmic nitrate reductase NapAB complex composed of NapA and NapB. The cofactor is [4Fe-4S] cluster. Mo-bis(molybdopterin guanine dinucleotide) serves as cofactor. Post-translationally, predicted to be exported by the Tat system. The position of the signal peptide cleavage has not been experimentally proven.

The protein localises to the periplasm. The catalysed reaction is 2 Fe(II)-[cytochrome] + nitrate + 2 H(+) = 2 Fe(III)-[cytochrome] + nitrite + H2O. In terms of biological role, catalytic subunit of the periplasmic nitrate reductase complex NapAB. Receives electrons from NapB and catalyzes the reduction of nitrate to nitrite. This chain is Periplasmic nitrate reductase, found in Histophilus somni (strain 129Pt) (Haemophilus somnus).